The chain runs to 289 residues: MTARLLRGGPAADALLAEATARAARLPAPPQLVMLRLGEDPASVSYVRGKDRKAREVGLKSTVYALPETTSQAELLDLIARLNADDTVNGILVQLPLPLHIQEQAVLHAIDPRKDVDGFHPLNVGELWAGRPALRPCTPAGILYLLDHYGIPVAGQRAVVVGRSSIVGRPLAGLLLHRDATVTVAHSRTPDLGAVTREADLLCVAVGRPHLITPDMVRPGATVVDVGINRVLGEGGGKAQLTGDVAPEVAQVAGAITPVPGGVGPMTIAQLLANTVLAAELQAKGRAAR.

Residues 162 to 164, Ser-187, and Ile-228 contribute to the NADP(+) site; that span reads GRS.

It belongs to the tetrahydrofolate dehydrogenase/cyclohydrolase family. In terms of assembly, homodimer.

The enzyme catalyses (6R)-5,10-methylene-5,6,7,8-tetrahydrofolate + NADP(+) = (6R)-5,10-methenyltetrahydrofolate + NADPH. It catalyses the reaction (6R)-5,10-methenyltetrahydrofolate + H2O = (6R)-10-formyltetrahydrofolate + H(+). It participates in one-carbon metabolism; tetrahydrofolate interconversion. Functionally, catalyzes the oxidation of 5,10-methylenetetrahydrofolate to 5,10-methenyltetrahydrofolate and then the hydrolysis of 5,10-methenyltetrahydrofolate to 10-formyltetrahydrofolate. The protein is Bifunctional protein FolD 2 of Deinococcus geothermalis (strain DSM 11300 / CIP 105573 / AG-3a).